The sequence spans 327 residues: uncharacterized protein (327 aa).

The signal sequence occupies residues 1–23; it reads MGGGRLPPLWLPLLIAWSEWGNC. Residues asparagine 144 and asparagine 239 are each glycosylated (N-linked (GlcNAc...) asparagine; by host). The segment at 298–327 is disordered; it reads EESEAAEETAAGEASAVAAAAVSEEEQRRE. Low complexity predominate over residues 305-319; that stretch reads ETAAGEASAVAAAAV.

This is an uncharacterized protein from Human cytomegalovirus (strain AD169) (HHV-5).